We begin with the raw amino-acid sequence, 384 residues long: Mannitol-1-phosphate 5-dehydrogenase (384 aa).

Residue 3 to 14 participates in NAD(+) binding; sequence AVHFGAGNIGRG.

It belongs to the mannitol dehydrogenase family.

The enzyme catalyses D-mannitol 1-phosphate + NAD(+) = beta-D-fructose 6-phosphate + NADH + H(+). The polypeptide is Mannitol-1-phosphate 5-dehydrogenase (Arthrobacter sp. (strain FB24)).